A 312-amino-acid polypeptide reads, in one-letter code: Aspartate carbamoyltransferase catalytic subunit (312 aa).

Positions 55 and 56 each coordinate carbamoyl phosphate. K83 is an L-aspartate binding site. Residues R105, H138, and Q141 each coordinate carbamoyl phosphate. The L-aspartate site is built by R171 and R225. Residues G266 and P267 each coordinate carbamoyl phosphate.

Belongs to the aspartate/ornithine carbamoyltransferase superfamily. ATCase family. As to quaternary structure, heterododecamer (2C3:3R2) of six catalytic PyrB chains organized as two trimers (C3), and six regulatory PyrI chains organized as three dimers (R2).

It carries out the reaction carbamoyl phosphate + L-aspartate = N-carbamoyl-L-aspartate + phosphate + H(+). It functions in the pathway pyrimidine metabolism; UMP biosynthesis via de novo pathway; (S)-dihydroorotate from bicarbonate: step 2/3. In terms of biological role, catalyzes the condensation of carbamoyl phosphate and aspartate to form carbamoyl aspartate and inorganic phosphate, the committed step in the de novo pyrimidine nucleotide biosynthesis pathway. This Corynebacterium efficiens (strain DSM 44549 / YS-314 / AJ 12310 / JCM 11189 / NBRC 100395) protein is Aspartate carbamoyltransferase catalytic subunit.